A 250-amino-acid chain; its full sequence is uncharacterized protein (250 aa).

The interval H182 to A205 is disordered. Pro residues predominate over residues T190–P201. The helical transmembrane segment at T230 to L250 threads the bilayer.

This sequence belongs to the ascovirus HvAV ORF18 family.

It localises to the membrane. This is an uncharacterized protein from Spodoptera frugiperda ascovirus 1a (SfAV-1a).